The chain runs to 251 residues: Triosephosphate isomerase (251 aa).

8 to 10 (NWK) is a substrate binding site. The active-site Electrophile is the histidine 97. The active-site Proton acceptor is the glutamate 170. Substrate-binding positions include glycine 176, serine 215, and 236 to 237 (GG).

It belongs to the triosephosphate isomerase family. As to quaternary structure, homodimer.

The protein resides in the cytoplasm. The catalysed reaction is D-glyceraldehyde 3-phosphate = dihydroxyacetone phosphate. It participates in carbohydrate biosynthesis; gluconeogenesis. It functions in the pathway carbohydrate degradation; glycolysis; D-glyceraldehyde 3-phosphate from glycerone phosphate: step 1/1. Its function is as follows. Involved in the gluconeogenesis. Catalyzes stereospecifically the conversion of dihydroxyacetone phosphate (DHAP) to D-glyceraldehyde-3-phosphate (G3P). The chain is Triosephosphate isomerase from Nitratidesulfovibrio vulgaris (strain ATCC 29579 / DSM 644 / CCUG 34227 / NCIMB 8303 / VKM B-1760 / Hildenborough) (Desulfovibrio vulgaris).